We begin with the raw amino-acid sequence, 292 residues long: 4-hydroxy-tetrahydrodipicolinate synthase (292 aa).

Thr45 contacts pyruvate. Tyr133 (proton donor/acceptor) is an active-site residue. The active-site Schiff-base intermediate with substrate is Lys161. Position 203 (Ile203) interacts with pyruvate.

It belongs to the DapA family. As to quaternary structure, homotetramer; dimer of dimers.

The protein resides in the cytoplasm. It carries out the reaction L-aspartate 4-semialdehyde + pyruvate = (2S,4S)-4-hydroxy-2,3,4,5-tetrahydrodipicolinate + H2O + H(+). The protein operates within amino-acid biosynthesis; L-lysine biosynthesis via DAP pathway; (S)-tetrahydrodipicolinate from L-aspartate: step 3/4. Functionally, catalyzes the condensation of (S)-aspartate-beta-semialdehyde [(S)-ASA] and pyruvate to 4-hydroxy-tetrahydrodipicolinate (HTPA). This is 4-hydroxy-tetrahydrodipicolinate synthase from Vibrio vulnificus (strain YJ016).